A 486-amino-acid polypeptide reads, in one-letter code: Recombining binding protein suppressor of hairless (486 aa).

DNA-binding stretches follow at residues 43 to 53 (QKSYGNEKRFF) and 151 to 156 (SKPSKK). Lys-161 is modified (N6-acetyllysine). The DNA-binding stretch occupies residues 178-183 (RLRSQT). In terms of domain architecture, IPT/TIG spans 341-431 (PVVESLQLNG…YSTSLTFTYT (91 aa)). Polar residues predominate over residues 451-467 (SSQVPPNESNTNSEGSY). The segment at 451–486 (SSQVPPNESNTNSEGSYTNASTNSTSVTSSTATVVS) is disordered. The segment covering 468 to 486 (TNASTNSTSVTSSTATVVS) has biased composition (low complexity).

This sequence belongs to the Su(H) family. As to quaternary structure, interacts with activated NOTCH1, NOTCH2 or NOTCH3. Interacts with MINT/SHARP. This interaction may mediate the recruitment of large corepressor complexes containing proteins such as HDAC1, HDAC2, NCOR2, SAP30, FHL1/KYOT2 and CIR1. Interacts with EP300, MAML1 and PTF1A. Interacts with RITA1, leading to nuclear export, prevent the interaction between RBPJ and NICD product and subsequent down-regulation of the Notch signaling pathway. Interacts with SNW1. Interacts with CHCHD2 and CXXC5. Interacts with BEND6 (via BEN domain). Interacts with NKAPL. Interacts with ZMIZ1. Interacts with RBM15. Interacts with L3MBTL3 and KDM1A; the interaction with KDM1A is weaker in the absence of L3MBTL3 and the interaction with L3MBTL3 is impaired by Notch-derived peptides containing the intracellular domain (NICD).

The protein resides in the nucleus. It localises to the cytoplasm. Transcriptional regulator that plays a central role in Notch signaling, a signaling pathway involved in cell-cell communication that regulates a broad spectrum of cell-fate determinations. Acts as a transcriptional repressor when it is not associated with Notch proteins. When associated with some NICD product of Notch proteins (Notch intracellular domain), it acts as a transcriptional activator that activates transcription of Notch target genes. Probably represses or activates transcription via the recruitment of chromatin remodeling complexes containing histone deacetylase or histone acetylase proteins, respectively. Specifically binds to the immunoglobulin kappa-type J segment recombination signal sequence. Binds specifically to methylated DNA. Binds to the oxygen responsive element of COX4I2 and activates its transcription under hypoxia conditions (4% oxygen). Negatively regulates the phagocyte oxidative burst in response to bacterial infection by repressing transcription of NADPH oxidase subunits. The chain is Recombining binding protein suppressor of hairless (RBPJ) from Pongo abelii (Sumatran orangutan).